Consider the following 294-residue polypeptide: Putative sugar lactone lactonase (294 aa).

A divalent metal cation-binding residues include E21, N150, and D201. D201 functions as the Proton donor/acceptor in the catalytic mechanism.

The protein belongs to the SMP-30/CGR1 family. Requires a divalent metal cation as cofactor.

Involved in the degradation of galactose via the DeLey-Doudoroff pathway. This Rhizobium meliloti (strain 1021) (Ensifer meliloti) protein is Putative sugar lactone lactonase.